We begin with the raw amino-acid sequence, 395 residues long: MLRTQAARLICNSRVITAKRTFALATRAAAYSRPAARFVKPMITTRGLKQINFGGTVETVYERADWPREKLLDYFKNDTFALIGYGSQGYGQGLNLRDNGLNVIIGVRKDGASWKAAIEDGWVPGKNLFTVEDAIKRGSYVMNLLSDAAQSETWPAIKPLLTKGKTLYFSHGFSPVFKDLTHVEPPKDLDVILVAPKGSGRTVRSLFKEGRGINSSYAVWNDVTGKAHEKAQALAVAIGSGYVYQTTFEREVNSDLYGERGCLMGGIHGMFLAQYDVLRENGHSPSEAFNETVEEATQSLYPLIGKYGMDYMYDACSTTARRGALDWYPIFKNALKPVFQDLYESTKNGTETKRSLEFNSQPDYREKLEKELDTIRNMEIWKVGKEVRKLRPENQ.

Residues 1–47 (MLRTQAARLICNSRVITAKRTFALATRAAAYSRPAARFVKPMITTRG) constitute a mitochondrion transit peptide. The KARI N-terminal Rossmann domain maps to 57-246 (VETVYERADW…AIGSGYVYQT (190 aa)). NADP(+) contacts are provided by residues 84-93 (GYGSQGYGQG), 108-113 (RKDGAS), and 146-150 (SDAAQ). The active site involves His-171. Residues 247–394 (TFEREVNSDL…KEVRKLRPEN (148 aa)) form the KARI C-terminal knotted domain. Mg(2+)-binding residues include Asp-255, Glu-259, Glu-291, and Glu-295. A substrate-binding site is contributed by Ser-317. Ser-355 bears the Phosphoserine mark. Residues 363 to 395 (DYREKLEKELDTIRNMEIWKVGKEVRKLRPENQ) are hydrophilic.

This sequence belongs to the ketol-acid reductoisomerase family. Mg(2+) is required as a cofactor.

Its subcellular location is the mitochondrion. The enzyme catalyses (2R)-2,3-dihydroxy-3-methylbutanoate + NADP(+) = (2S)-2-acetolactate + NADPH + H(+). It carries out the reaction (2R,3R)-2,3-dihydroxy-3-methylpentanoate + NADP(+) = (S)-2-ethyl-2-hydroxy-3-oxobutanoate + NADPH + H(+). It participates in amino-acid biosynthesis; L-isoleucine biosynthesis; L-isoleucine from 2-oxobutanoate: step 2/4. The protein operates within amino-acid biosynthesis; L-valine biosynthesis; L-valine from pyruvate: step 2/4. Involved in the biosynthesis of branched-chain amino acids (BCAA). Catalyzes the second common step in the parallel biosynthesis of isoleucine and valine. Converts alpha-aceto-alpha-hydroxybutyrate (AHB) to alpha,beta-dihydroxy-beta-methylvalerate (DHMV) and alpha-acetolactate (AL) to alpha,beta-dihydroxy-isovalerate (DHV) in isoleucine and valine biosynthesis, respectively. The polypeptide is Ketol-acid reductoisomerase, mitochondrial (Saccharomyces cerevisiae (strain ATCC 204508 / S288c) (Baker's yeast)).